The primary structure comprises 224 residues: Biotin transport ATP-binding protein BioM (224 aa).

One can recognise an ABC transporter domain in the interval 3–224; that stretch reads IQFESAGVSF…AIARYREIAA (222 aa). 34-41 serves as a coordination point for ATP; sequence GLNGSGKT.

It belongs to the ABC transporter superfamily. In terms of assembly, part of a biotin transporter complex composed of BioM, BioN and BioY.

The protein localises to the cell inner membrane. In terms of biological role, involved in biotin uptake. In Rhizobium etli (strain ATCC 51251 / DSM 11541 / JCM 21823 / NBRC 15573 / CFN 42), this protein is Biotin transport ATP-binding protein BioM (bioM).